The following is a 208-amino-acid chain: Flavin-dependent thymidylate synthase (208 aa).

In terms of domain architecture, ThyX spans 1–208 (MEVICKHYTP…QYLFEDCLKH (208 aa)). Residues serine 50 and 74-76 (RHR) each bind FAD. DUMP-binding positions include 71–74 (ELSR), 84–86 (SSR), and lysine 147. Residues 74–84 (RHRIASLSVKS) carry the ThyX motif motif. Residues 163–165 (NAR) and asparagine 169 contribute to the FAD site. Position 174 (arginine 174) interacts with dUMP. Arginine 174 serves as the catalytic Involved in ionization of N3 of dUMP, leading to its activation.

Belongs to the thymidylate synthase ThyX family. As to quaternary structure, homotetramer. The cofactor is FAD.

It carries out the reaction dUMP + (6R)-5,10-methylene-5,6,7,8-tetrahydrofolate + NADPH + H(+) = dTMP + (6S)-5,6,7,8-tetrahydrofolate + NADP(+). It participates in pyrimidine metabolism; dTTP biosynthesis. Catalyzes the reductive methylation of 2'-deoxyuridine-5'-monophosphate (dUMP) to 2'-deoxythymidine-5'-monophosphate (dTMP) while utilizing 5,10-methylenetetrahydrofolate (mTHF) as the methyl donor, and NADPH and FADH(2) as the reductant. The sequence is that of Flavin-dependent thymidylate synthase from Helicobacter pylori (strain J99 / ATCC 700824) (Campylobacter pylori J99).